A 138-amino-acid polypeptide reads, in one-letter code: Basic phospholipase A2 ammodytoxin A (138 aa).

The signal sequence occupies residues 1 to 16 (MRTLWIVAVCLIGVEG). Cystine bridges form between Cys-42–Cys-131, Cys-44–Cys-60, Cys-59–Cys-111, Cys-65–Cys-138, Cys-66–Cys-104, Cys-73–Cys-97, and Cys-91–Cys-102. The Ca(2+) site is built by Tyr-43, Gly-45, and Gly-47. His-63 is an active-site residue. Asp-64 contributes to the Ca(2+) binding site. Asp-105 is a catalytic residue.

It belongs to the phospholipase A2 family. Group II subfamily. D49 sub-subfamily. Monomer. Binds to calmodulin, coagulation factor X (F10), M-type PLA2 receptor (R-180). May also bind to 14-3-3 proteins gamma (YWHAG) and epsilon (YWHAE), and R25, a mitochondrial membrane protein. Ca(2+) serves as cofactor. In terms of tissue distribution, expressed by the venom gland.

The protein localises to the secreted. It localises to the host cytoplasm. The protein resides in the host cytosol. It carries out the reaction a 1,2-diacyl-sn-glycero-3-phosphocholine + H2O = a 1-acyl-sn-glycero-3-phosphocholine + a fatty acid + H(+). Snake venom phospholipase A2 (PLA2) that acts as a presynaptic neurotoxin, an inhibitor of blood coagulation, and has been found to bind with high affinity to intracellular proteins. The response of indirectly stimulated neuromuscular preparations to ammodytoxin (Atx) is triphasic. The first phase, the transient inhibition of the acetylcholine (ACh) release, starts soon after the addition of Atx and lasts for several minutes. This phase is probably independent of Atx enzymatic activity. The effect may be due to the specific binding of the toxin to presynaptic receptors. These receptors, called N-type receptors, are still unidentified. It is noteworthy that a neuronal isoform of the M-type PLA2 receptor (R180) has been identified as a high-affinity receptor for Atx in neuronal plasma membranes. It was demonstrated however that this receptor is not essential for expression of neurotoxicity by Atx. The second phase corresponds to an augmentation of neurotransmitter release. A peak is reached 10-20 minutes after exposure of the preparation to Atx and is followed by a gradual reduction. In this phase, the enzymatic activity of Atx of the mammalian is not significant. It is speculated that the increased release of neurotransmitter in this phase is induced by the interference of Atx with voltage-gated potassium channels. Measurements of ionic currents showed however that voltage-gated potassium channels are not affected by Atx. The third phase of the response of neuromuscular preparations to Atx, which corresponds to a complete and irreversible paralysis, is clearly dependent on the hydrolytic activity of the toxin. In addition to its presynaptic neurotoxicity, Atx shows an anticoagulant activity by binding with high affinity to activated coagulation factor X (F10) thus inhibiting the formation of the prothrombinase complex (FX/FV) and its activity (IC(50) is 20 nM). Surprisingly, Atx was discovered to bind intracellular proteins such as calmodulin (CaM) (IC(50) is 6 nM), 14-3-3 proteins gamma (YWHAG) and epsilon (YWHAE) (by similarity with AtxC), as well as R25 (by similarity with AtxC), a mitochondrial integral membrane protein found in cerebral cortex. These findings raised a doubt about the dogma of the exclusively extracellular action of PLA2s, defended by the potential instability of these molecules in the reducing environment of the eukaryotic cytosol coupled with their possible inability to act as enzymes in this cellular compartment, due to too low concentration of calcium ions. This hypothesis was challenged efficiently by demonstrating the internalization of AtxA into a culture cells, but still remains to be directly demonstrated in vivo. PLA2 catalyzes the calcium-dependent hydrolysis of the 2-acyl groups in 3-sn-phosphoglycerides. The chain is Basic phospholipase A2 ammodytoxin A from Vipera ammodytes ammodytes (Western sand viper).